The chain runs to 455 residues: MIAVAILAAGKGTRMRSNLPKVLHQLGGKSLIERVLSSTQNLSPSRQIVIVGYSADQVRTEMQGWPNLEFVEQTEQLGTGHAVQQVLPVMEGFEGDLLVLNGDVPLLRPGTLQKMLATHQEHQNAATILTAQLPNPKGYGRVFCDAQMHLQEIIEDRDCTPAQRQNQRINAGVYCFRWSALAKVLPNLKAENDQKEYYLTDAVNYLDPVMVLDVDDYQEILGINDRKQLATAYKILQDRIKDDWLVAGVTIMDPDSITIDETVELGTDVIIEPQTHLRGDTKIDTGSRIGPGSLIENSHIGTNVQVLYSVISDSRVGDNSRIGPYTHLRGNVQIGEKCRVGNFVEMKKTTIGDRTNVAHLSYLGDATLGTQVNIGAGTITANYDGVNKHPTQIGDRTKTGANSVLVAPITLGANVTVAAGSTITKNVDDDVLVVARQRQSVLPGWRPISSKQTEK.

The tract at residues 1-226 (MIAVAILAAG…YQEILGINDR (226 aa)) is pyrophosphorylase. UDP-N-acetyl-alpha-D-glucosamine contacts are provided by residues 7-10 (LAAG), Lys21, Gln73, and 78-79 (GT). Asp103 provides a ligand contact to Mg(2+). The UDP-N-acetyl-alpha-D-glucosamine site is built by Gly140, Glu155, Asn170, and Asn224. Asn224 is a Mg(2+) binding site. The segment at 227–247 (KQLATAYKILQDRIKDDWLVA) is linker. Positions 248–455 (GVTIMDPDSI…RPISSKQTEK (208 aa)) are N-acetyltransferase. UDP-N-acetyl-alpha-D-glucosamine is bound by residues Arg329 and Lys347. His359 functions as the Proton acceptor in the catalytic mechanism. UDP-N-acetyl-alpha-D-glucosamine contacts are provided by Tyr362 and Asn373. Acetyl-CoA contacts are provided by residues Ala376, 382 to 383 (NY), Ala419, and Arg436.

In the N-terminal section; belongs to the N-acetylglucosamine-1-phosphate uridyltransferase family. The protein in the C-terminal section; belongs to the transferase hexapeptide repeat family. In terms of assembly, homotrimer. Mg(2+) is required as a cofactor.

It is found in the cytoplasm. The enzyme catalyses alpha-D-glucosamine 1-phosphate + acetyl-CoA = N-acetyl-alpha-D-glucosamine 1-phosphate + CoA + H(+). It carries out the reaction N-acetyl-alpha-D-glucosamine 1-phosphate + UTP + H(+) = UDP-N-acetyl-alpha-D-glucosamine + diphosphate. The protein operates within nucleotide-sugar biosynthesis; UDP-N-acetyl-alpha-D-glucosamine biosynthesis; N-acetyl-alpha-D-glucosamine 1-phosphate from alpha-D-glucosamine 6-phosphate (route II): step 2/2. It participates in nucleotide-sugar biosynthesis; UDP-N-acetyl-alpha-D-glucosamine biosynthesis; UDP-N-acetyl-alpha-D-glucosamine from N-acetyl-alpha-D-glucosamine 1-phosphate: step 1/1. It functions in the pathway bacterial outer membrane biogenesis; LPS lipid A biosynthesis. Its function is as follows. Catalyzes the last two sequential reactions in the de novo biosynthetic pathway for UDP-N-acetylglucosamine (UDP-GlcNAc). The C-terminal domain catalyzes the transfer of acetyl group from acetyl coenzyme A to glucosamine-1-phosphate (GlcN-1-P) to produce N-acetylglucosamine-1-phosphate (GlcNAc-1-P), which is converted into UDP-GlcNAc by the transfer of uridine 5-monophosphate (from uridine 5-triphosphate), a reaction catalyzed by the N-terminal domain. The protein is Bifunctional protein GlmU of Acaryochloris marina (strain MBIC 11017).